A 138-amino-acid chain; its full sequence is Basic phospholipase A2 Drk-b1 (138 aa).

The first 16 residues, 1–16 (MRTLWIVAMCLIGVEG), serve as a signal peptide directing secretion. 7 cysteine pairs are disulfide-bonded: cysteine 42–cysteine 131, cysteine 44–cysteine 60, cysteine 59–cysteine 111, cysteine 65–cysteine 138, cysteine 66–cysteine 104, cysteine 73–cysteine 97, and cysteine 91–cysteine 102. Positions 43, 45, and 47 each coordinate Ca(2+). Residue histidine 63 is part of the active site. A Ca(2+)-binding site is contributed by aspartate 64. Aspartate 105 is an active-site residue.

Requires Ca(2+) as cofactor. In terms of tissue distribution, expressed by the venom gland.

It localises to the secreted. It carries out the reaction a 1,2-diacyl-sn-glycero-3-phosphocholine + H2O = a 1-acyl-sn-glycero-3-phosphocholine + a fatty acid + H(+). Functionally, exhibits high hydrolytic activities and shows strong preference for the anionic micelles (dPPC with deoxycholate) to the zwitterionic micelles (dPPC with Triton X-100). PLA2 catalyzes the calcium-dependent hydrolysis of the 2-acyl groups in 3-sn-phosphoglycerides. The protein is Basic phospholipase A2 Drk-b1 of Daboia russelii (Russel's viper).